The primary structure comprises 200 residues: uncharacterized protein (200 aa).

The N-terminal stretch at 1-19 (MNAMFHSLFALSFVSLVAS) is a signal peptide. Residues 148–168 (FMVIVSLAAFCISVLAGLALQ) traverse the membrane as a helical segment.

The protein localises to the membrane. This is an uncharacterized protein from Caenorhabditis elegans.